Reading from the N-terminus, the 161-residue chain is Probable calcium-binding protein CML16 (161 aa).

4 consecutive EF-hand domains span residues 8–43 (DQIK…LGIK), 44–79 (PRGD…DINE), 83–118 (INQE…MGHP), and 119–154 (LTYR…SAAD). Residues Asp21, Asp23, Asp25, Ser27, Glu32, Asp57, Asn59, Asn61, Ser63, Glu68, Asp96, Asp98, Asn100, Ser102, Glu107, Asp132, Asn134, Asp136, and Glu143 each coordinate Ca(2+).

Functionally, potential calcium sensor. The polypeptide is Probable calcium-binding protein CML16 (CML16) (Arabidopsis thaliana (Mouse-ear cress)).